Consider the following 715-residue polypeptide: Beta-galactosidase 9 (715 aa).

An N-terminal signal peptide occupies residues 1–20; sequence MSGGAVAFLLLVAAAAVANA. Glu-178 (proton donor) is an active-site residue. Glu-247 functions as the Nucleophile in the catalytic mechanism.

Belongs to the glycosyl hydrolase 35 family.

Its subcellular location is the secreted. It localises to the extracellular space. The protein resides in the apoplast. It catalyses the reaction Hydrolysis of terminal non-reducing beta-D-galactose residues in beta-D-galactosides.. The sequence is that of Beta-galactosidase 9 from Oryza sativa subsp. japonica (Rice).